We begin with the raw amino-acid sequence, 1175 residues long: Solute carrier family 9 member C1 (1175 aa).

Over 1–39 (MEMEEISENLTASHSIKLTNMWLELLKSVFLSTPQDLPE) the chain is Extracellular. Residues 40–59 (IILILSLICTVGAFLNMHLK) traverse the membrane as a helical segment. Over 60-64 (DFPIP) the chain is Cytoplasmic. A helical transmembrane segment spans residues 65–82 (LPVILFLIGCCFEILSFA). Residues 83–98 (STQIQIYADAIQWMDP) lie on the Extracellular side of the membrane. Residues 99–115 (DIFFGIFTPVIIFNVAF) form a helical membrane-spanning segment. Residues 116 to 125 (DMDIYMLQKL) are Cytoplasmic-facing. A helical transmembrane segment spans residues 126 to 151 (FWQILVITIPGFLINYTLILWYLQSV). The interval 126–213 (FWQILVITIP…SLVIYSGVVH (88 aa)) is transport core domain. The Extracellular portion of the chain corresponds to 152 to 157 (NKLSLK). A helical transmembrane segment spans residues 158-183 (TVPWLLFSAVLISSDPMLTSASIRDL). Residues 184–186 (GLS) are Cytoplasmic-facing. The helical transmembrane segment at 187–212 (RSLTNLINGESLLTSVLSLVIYSGVV) threads the bilayer. At 213 to 225 (HIRFKSKSVNHTL) the chain is on the extracellular side. Residues 226 to 257 (AHKVMSTAWSYIVESFITGIVFTKVIQLWMAT) traverse the membrane as a helical segment. The Cytoplasmic segment spans residues 258–261 (IFGD). Residues 262–283 (DVNHITLIFSVLYLIFYVCELV) form a helical membrane-spanning segment. The Extracellular segment spans residues 284 to 286 (GMS). The helical transmembrane segment at 287 to 300 (GIFTLATIGLFLNS) threads the bilayer. Residues 301-307 (TSFKPGV) are Cytoplasmic-facing. The chain crosses the membrane as a helical span at residues 308 to 339 (EAFLLEFWNCLSFIGFLMVFTFIGLLIPAHTY). At 340–344 (LHISF) the chain is on the extracellular side. Residues 345–374 (SDVYYSLNIYFTLIVLRLLVFLLMSPILSR) form a helical membrane-spanning segment. Residues 345–446 (SDVYYSLNIY…FILPMAVTKL (102 aa)) form a transport core domain region. Over 375–380 (LGHGFS) the chain is Cytoplasmic. A helical membrane pass occupies residues 381-411 (WRWAFIMVWSEMKGTPNINMALLLAYSDISL). The Extracellular segment spans residues 412 to 415 (GSER). Residues 416–446 (ERSQILFHGVSVCVITLIVNRFILPMAVTKL) form a helical membrane-spanning segment. At 447–632 (GLRDVTSTKY…ACHRIVFTNE (186 aa)) the chain is on the cytoplasmic side. Residues 618-698 (YMFLHACHRI…EFFSHTWLLF (81 aa)) are ion transport-like. Residues 633 to 653 (FEYTGYLVVLMSTYPMIICWI) traverse the membrane as a helical segment. The Extracellular segment spans residues 654 to 657 (SRLK). Residues 658-684 (DIYDNEIKCANYYFLAFYILEALLKVA) traverse the membrane as a helical segment. Topologically, residues 685–691 (AMRKEFF) are cytoplasmic. A helical transmembrane segment spans residues 692-716 (SHTWLLFELGITLVGVLDIILIETD). At 717–724 (SISYNFDL) the chain is on the extracellular side. Residues 725-751 (TETVVFMNVIRLLRILRILKLVTPKLL) form a helical membrane-spanning segment. The Cytoplasmic segment spans residues 752–1175 (QIIDKRMSQQ…EELIEENINI (424 aa)). The segment covering 1137-1146 (MKPDSERESF) has biased composition (basic and acidic residues). A disordered region spans residues 1137 to 1175 (MKPDSERESFETLDETSEEDNGKKENQENEELIEENINI). A compositionally biased stretch (acidic residues) spans 1164-1175 (ENEELIEENINI).

The protein belongs to the monovalent cation:proton antiporter 1 (CPA1) transporter (TC 2.A.36) family. In terms of assembly, interacts with soluble adenylyl cyclase (sAC). As to expression, testis-specific. Specifically present in the principal piece of sperm tail (at protein level).

Its subcellular location is the cell projection. It is found in the cilium. The protein resides in the flagellum membrane. Its function is as follows. Sperm-specific solute carrier involved in intracellular pH regulation of spermatozoa. Required for sperm motility and fertility. Involved in sperm cell hyperactivation, a step needed for sperm motility which is essential late in the preparation of sperm for fertilization. Required for the expression and bicarbonate regulation of the soluble adenylyl cyclase (sAC). This chain is Solute carrier family 9 member C1 (Slc9c1), found in Mus musculus (Mouse).